The chain runs to 285 residues: MSDAAEEQPMETTGATENGHEAAPEGEAPVEPSAAAAAPAASAGSGGGTTTAPSGNQNGAEGDQINASKNEEDAGKMFVGGLSWDTSKKDLKDYFTKFGEVVDCTIKMDPNTGRSRGFGFILFKDSSSVEKVLDQKEHRLDGRVIDPKKAMAMKKDPVKKIFVGGLNPEATEEKIREYFGQFGEIEAIELPIDPKLNKRRGFVFITFKEEDPVKKVLEKKFHTVSGSKCEIKVAQPKEVYQQQQYGSGGRGNRNRGNRGSGGGQGSTNYGKSQRRGGHQNNYKPY.

The interval 1–65 is disordered; that stretch reads MSDAAEEQPM…NQNGAEGDQI (65 aa). The segment covering 25–43 has biased composition (low complexity); it reads EGEAPVEPSAAAAAPAASA. 2 consecutive RRM domains span residues 75-158 and 159-238; these read GKMF…KDPV and KKIF…QPKE. Ser87 is modified (phosphoserine). Glycyl lysine isopeptide (Lys-Gly) (interchain with G-Cter in SUMO2) cross-links involve residues Lys136 and Lys208. The residue at position 220 (Lys220) is an N6-acetyllysine. The segment at 239-285 is disordered; that stretch reads VYQQQQYGSGGRGNRNRGNRGSGGGQGSTNYGKSQRRGGHQNNYKPY. Ser247 carries the post-translational modification Phosphoserine. Dimethylated arginine; alternate is present on Arg250. An Omega-N-methylarginine; alternate modification is found at Arg250. Residues Arg255 and Arg258 each carry the omega-N-methylarginine modification. Residue Lys271 is modified to N6-acetyllysine. Arg275 is subject to Dimethylated arginine; alternate. The residue at position 275 (Arg275) is an Omega-N-methylarginine; alternate. Arg275 bears the Asymmetric dimethylarginine; alternate mark.

As to quaternary structure, identified in a IGF2BP1-dependent mRNP granule complex containing untranslated mRNAs. Interacts with APOBEC1. Ubiquitous.

The protein resides in the nucleus. It is found in the cytoplasm. Functionally, transcriptional repressor. Binds to CArG box motifs, single-stranded and double-stranded DNA, and RNA. It may be that repression by CBF-A is a result of competitive binding of CBF, a putative positive factor, and CBF-A to the same or overlapping motifs around the CArG boxes. This chain is Heterogeneous nuclear ribonucleoprotein A/B (Hnrnpab), found in Mus musculus (Mouse).